Here is a 322-residue protein sequence, read N- to C-terminus: Pantothenate kinase (322 aa).

Glycine 101–serine 108 serves as a coordination point for ATP.

The protein belongs to the prokaryotic pantothenate kinase family.

The protein localises to the cytoplasm. The catalysed reaction is (R)-pantothenate + ATP = (R)-4'-phosphopantothenate + ADP + H(+). It participates in cofactor biosynthesis; coenzyme A biosynthesis; CoA from (R)-pantothenate: step 1/5. The protein is Pantothenate kinase of Psychromonas ingrahamii (strain DSM 17664 / CCUG 51855 / 37).